A 317-amino-acid polypeptide reads, in one-letter code: Acetyl-coenzyme A carboxylase carboxyl transferase subunit alpha (317 aa).

The CoA carboxyltransferase C-terminal domain maps to 40 to 294; that stretch reads RLQKKSEELT…KARLLTDLED (255 aa).

This sequence belongs to the AccA family. Acetyl-CoA carboxylase is a heterohexamer composed of biotin carboxyl carrier protein (AccB), biotin carboxylase (AccC) and two subunits each of ACCase subunit alpha (AccA) and ACCase subunit beta (AccD).

It localises to the cytoplasm. It carries out the reaction N(6)-carboxybiotinyl-L-lysyl-[protein] + acetyl-CoA = N(6)-biotinyl-L-lysyl-[protein] + malonyl-CoA. It functions in the pathway lipid metabolism; malonyl-CoA biosynthesis; malonyl-CoA from acetyl-CoA: step 1/1. Component of the acetyl coenzyme A carboxylase (ACC) complex. First, biotin carboxylase catalyzes the carboxylation of biotin on its carrier protein (BCCP) and then the CO(2) group is transferred by the carboxyltransferase to acetyl-CoA to form malonyl-CoA. This Actinobacillus succinogenes (strain ATCC 55618 / DSM 22257 / CCUG 43843 / 130Z) protein is Acetyl-coenzyme A carboxylase carboxyl transferase subunit alpha.